The chain runs to 179 residues: uncharacterized protein (179 aa).

4 helical membrane-spanning segments follow: residues His-33–Asp-53, Val-63–Leu-83, Ile-89–Thr-109, and Phe-115–Phe-135.

The protein localises to the cell membrane. This is an uncharacterized protein from Bacillus subtilis (strain 168).